A 182-amino-acid chain; its full sequence is Flavodoxin (182 aa).

Residues 4 to 173 enclose the Flavodoxin-like domain; that stretch reads IGLFFGSDTG…RLKGWLSLIA (170 aa).

It belongs to the flavodoxin family. FMN serves as cofactor.

Low-potential electron donor to a number of redox enzymes. NifF is the electron donor to nitrogenase. In Rhodobacter capsulatus (strain ATCC BAA-309 / NBRC 16581 / SB1003), this protein is Flavodoxin (nifF).